Here is a 173-residue protein sequence, read N- to C-terminus: NADH-quinone oxidoreductase subunit B 2 (173 aa).

C42, C43, C107, and C137 together coordinate [4Fe-4S] cluster.

This sequence belongs to the complex I 20 kDa subunit family. NDH-1 is composed of 14 different subunits. Subunits NuoB, C, D, E, F, and G constitute the peripheral sector of the complex. [4Fe-4S] cluster is required as a cofactor.

The protein localises to the cell inner membrane. The catalysed reaction is a quinone + NADH + 5 H(+)(in) = a quinol + NAD(+) + 4 H(+)(out). Functionally, NDH-1 shuttles electrons from NADH, via FMN and iron-sulfur (Fe-S) centers, to quinones in the respiratory chain. Couples the redox reaction to proton translocation (for every two electrons transferred, four hydrogen ions are translocated across the cytoplasmic membrane), and thus conserves the redox energy in a proton gradient. The sequence is that of NADH-quinone oxidoreductase subunit B 2 from Anaeromyxobacter dehalogenans (strain 2CP-C).